We begin with the raw amino-acid sequence, 380 residues long: Cytochrome b (380 aa).

Helical transmembrane passes span 33 to 53 (FGSL…FLAM), 77 to 98 (WLIR…FIHV), 113 to 133 (WNIG…GYVL), and 178 to 198 (FFAF…VHLL). Heme b is bound by residues histidine 83 and histidine 97. 2 residues coordinate heme b: histidine 182 and histidine 196. Histidine 201 is an a ubiquinone binding site. 4 helical membrane passes run 226–246 (IKDL…VLFF), 288–308 (LGGV…PFLN), 320–340 (ITQF…WIGG), and 347–367 (FTTI…VLMP).

It belongs to the cytochrome b family. In terms of assembly, the cytochrome bc1 complex contains 11 subunits: 3 respiratory subunits (MT-CYB, CYC1 and UQCRFS1), 2 core proteins (UQCRC1 and UQCRC2) and 6 low-molecular weight proteins (UQCRH/QCR6, UQCRB/QCR7, UQCRQ/QCR8, UQCR10/QCR9, UQCR11/QCR10 and a cleavage product of UQCRFS1). This cytochrome bc1 complex then forms a dimer. Heme b serves as cofactor.

The protein localises to the mitochondrion inner membrane. Component of the ubiquinol-cytochrome c reductase complex (complex III or cytochrome b-c1 complex) that is part of the mitochondrial respiratory chain. The b-c1 complex mediates electron transfer from ubiquinol to cytochrome c. Contributes to the generation of a proton gradient across the mitochondrial membrane that is then used for ATP synthesis. This is Cytochrome b (MT-CYB) from Thomasomys ischyrus (Strong-tailed oldfield mouse).